Reading from the N-terminus, the 220-residue chain is Translation initiation factor 6 (220 aa).

This sequence belongs to the eIF-6 family.

In terms of biological role, binds to the 50S ribosomal subunit and prevents its association with the 30S ribosomal subunit to form the 70S initiation complex. The sequence is that of Translation initiation factor 6 from Pyrobaculum arsenaticum (strain DSM 13514 / JCM 11321 / PZ6).